Consider the following 305-residue polypeptide: Acetyl-coenzyme A carboxylase carboxyl transferase subunit beta (305 aa).

The CoA carboxyltransferase N-terminal domain occupies 27-296; sequence LWVKCSSCRE…SPAKAELAGR (270 aa). Residues Cys31, Cys34, Cys50, and Cys53 each contribute to the Zn(2+) site. The segment at 31 to 53 adopts a C4-type zinc-finger fold; that stretch reads CSSCRELIYKKQLNDNLKVCPKC.

This sequence belongs to the AccD/PCCB family. As to quaternary structure, acetyl-CoA carboxylase is a heterohexamer composed of biotin carboxyl carrier protein (AccB), biotin carboxylase (AccC) and two subunits each of ACCase subunit alpha (AccA) and ACCase subunit beta (AccD). It depends on Zn(2+) as a cofactor.

The protein localises to the cytoplasm. It carries out the reaction N(6)-carboxybiotinyl-L-lysyl-[protein] + acetyl-CoA = N(6)-biotinyl-L-lysyl-[protein] + malonyl-CoA. Its pathway is lipid metabolism; malonyl-CoA biosynthesis; malonyl-CoA from acetyl-CoA: step 1/1. Functionally, component of the acetyl coenzyme A carboxylase (ACC) complex. Biotin carboxylase (BC) catalyzes the carboxylation of biotin on its carrier protein (BCCP) and then the CO(2) group is transferred by the transcarboxylase to acetyl-CoA to form malonyl-CoA. The protein is Acetyl-coenzyme A carboxylase carboxyl transferase subunit beta of Chloroflexus aurantiacus (strain ATCC 29366 / DSM 635 / J-10-fl).